Here is a 156-residue protein sequence, read N- to C-terminus: Small ribosomal subunit protein uS7 (156 aa).

This sequence belongs to the universal ribosomal protein uS7 family. In terms of assembly, part of the 30S ribosomal subunit. Contacts proteins S9 and S11.

Functionally, one of the primary rRNA binding proteins, it binds directly to 16S rRNA where it nucleates assembly of the head domain of the 30S subunit. Is located at the subunit interface close to the decoding center, probably blocks exit of the E-site tRNA. This chain is Small ribosomal subunit protein uS7, found in Shewanella woodyi (strain ATCC 51908 / MS32).